The primary structure comprises 124 residues: Small ribosomal subunit protein uS13 (124 aa).

The tract at residues 94–124 (GLPLRGQRTKNNSRTRKGKRKTVANKKKATK) is disordered. Residues 100-124 (QRTKNNSRTRKGKRKTVANKKKATK) are compositionally biased toward basic residues.

This sequence belongs to the universal ribosomal protein uS13 family. In terms of assembly, part of the 30S ribosomal subunit. Forms a loose heterodimer with protein S19. Forms two bridges to the 50S subunit in the 70S ribosome.

Functionally, located at the top of the head of the 30S subunit, it contacts several helices of the 16S rRNA. In the 70S ribosome it contacts the 23S rRNA (bridge B1a) and protein L5 of the 50S subunit (bridge B1b), connecting the 2 subunits; these bridges are implicated in subunit movement. Contacts the tRNAs in the A and P-sites. The polypeptide is Small ribosomal subunit protein uS13 (Flavobacterium psychrophilum (strain ATCC 49511 / DSM 21280 / CIP 103535 / JIP02/86)).